The sequence spans 496 residues: Glycerol kinase (496 aa).

Position 12 (Thr-12) interacts with ADP. ATP is bound by residues Thr-12, Thr-13, and Ser-14. Thr-12 contributes to the sn-glycerol 3-phosphate binding site. An ADP-binding site is contributed by Arg-16. Residues Arg-82, Glu-83, and Tyr-134 each coordinate sn-glycerol 3-phosphate. Residues Arg-82, Glu-83, and Tyr-134 each contribute to the glycerol site. A Phosphohistidine; by HPr modification is found at His-230. Asp-244 contacts sn-glycerol 3-phosphate. 2 residues coordinate glycerol: Asp-244 and Gln-245. Residues Thr-266 and Gly-309 each contribute to the ADP site. Positions 266, 309, 313, and 410 each coordinate ATP. Gly-410 and Asn-414 together coordinate ADP.

It belongs to the FGGY kinase family. As to quaternary structure, homotetramer and homodimer (in equilibrium). Post-translationally, the phosphoenolpyruvate-dependent sugar phosphotransferase system (PTS), including enzyme I, and histidine-containing protein (HPr) are required for the phosphorylation, which leads to the activation of the enzyme.

It carries out the reaction glycerol + ATP = sn-glycerol 3-phosphate + ADP + H(+). It participates in polyol metabolism; glycerol degradation via glycerol kinase pathway; sn-glycerol 3-phosphate from glycerol: step 1/1. Activated by phosphorylation and inhibited by fructose 1,6-bisphosphate (FBP). Key enzyme in the regulation of glycerol uptake and metabolism. Catalyzes the phosphorylation of glycerol to yield sn-glycerol 3-phosphate. The protein is Glycerol kinase of Bacillus thuringiensis (strain Al Hakam).